The following is a 422-amino-acid chain: Gamma-glutamyl phosphate reductase (422 aa).

The protein belongs to the gamma-glutamyl phosphate reductase family.

It localises to the cytoplasm. The enzyme catalyses L-glutamate 5-semialdehyde + phosphate + NADP(+) = L-glutamyl 5-phosphate + NADPH + H(+). Its pathway is amino-acid biosynthesis; L-proline biosynthesis; L-glutamate 5-semialdehyde from L-glutamate: step 2/2. Its function is as follows. Catalyzes the NADPH-dependent reduction of L-glutamate 5-phosphate into L-glutamate 5-semialdehyde and phosphate. The product spontaneously undergoes cyclization to form 1-pyrroline-5-carboxylate. This Nitrosomonas eutropha (strain DSM 101675 / C91 / Nm57) protein is Gamma-glutamyl phosphate reductase.